A 643-amino-acid polypeptide reads, in one-letter code: MLASQAIKRIFHRSWKPLVRFNHGKAPTAIESIKKRIEDIPIENYRNFSIVAHIDHGKSTLSDRLLELTGVIQSGGNKQVLDRLEVERERGITVKAQTCTMFYHDKRYGKDFLIHLVDTPGHVDFRGEVSRSYASCGGALLLVDASQGVQAQTVANFYLAYSMNLKLIPVINKIDLDHADIAQAEDQIENTFELPKEDTIRVSAKTGLNVKEDLLPAIIDRIPPPTGCLDKPFRALLVDSWYDSYVGVVLLVHIVDGTVRKGDKVSSAQTGKKYEIKEIGIMFPDRTPTGILSTGQVGYVVPGMKASKDAKIGDTLMHLGREQETEVLPGFEEPKPMVFVGAFPSDGEEFKALNDDVNRLVLNDRSVSLKRETSNALGQGWRLGFLGSLHASVFRERLENEYGSKLIITQPTVPYMIKYYDGHERLITNPDEFPDLAERRNKVQAIQEPYVEAIMTLPQEYLGNVIKLCDHNRGQQTEITYLNMTGQVMLKYDLPLGQLVEDFFGKLKSVSRGYASLDYEDIGYRDSDVVKLELLINGSSVDALAQVMHSSQVERVGRAWVKKFKEYIKAQLFEVVIQARANSKIIARETIKAKRKDVLQKLHASDISRRKKLLVKQKEGKKHLKSVGNVQINQDAYQAFLRR.

The N-terminal 18 residues, 1–18 (MLASQAIKRIFHRSWKPL), are a transit peptide targeting the mitochondrion. A tr-type G domain is found at 43–226 (ENYRNFSIVA…AIIDRIPPPT (184 aa)). Residues 52–59 (AHIDHGKS), 118–122 (DTPGH), and 172–175 (NKID) contribute to the GTP site.

The protein belongs to the TRAFAC class translation factor GTPase superfamily. Classic translation factor GTPase family. LepA subfamily.

Its subcellular location is the mitochondrion inner membrane. It carries out the reaction GTP + H2O = GDP + phosphate + H(+). In terms of biological role, promotes mitochondrial protein synthesis. May act as a fidelity factor of the translation reaction, by catalyzing a one-codon backward translocation of tRNAs on improperly translocated ribosomes. Binds to mitochondrial ribosomes in a GTP-dependent manner. In Zygosaccharomyces rouxii (strain ATCC 2623 / CBS 732 / NBRC 1130 / NCYC 568 / NRRL Y-229), this protein is Translation factor GUF1, mitochondrial.